The primary structure comprises 217 residues: MVFSSAKREKNNMLAVNNLCIERNGRAIIQDLSFTLEGQKRLFVQGEIGSGKTTLLLALLGFVPVTKGEIKLFGKVCRKEKDFAPFRGTIGICFQNADDQLFGPTVLDDIAFGPLNQNVPREQAYHIAEQQLERLGITRLKDRMVHTLSGGEKNFTALAGVLAMQPKILLLDEPTNGLDRKNTEKLTALLRELSLPILISSHHHGFINELATEIISL.

Residues 14-217 enclose the ABC transporter domain; that stretch reads LAVNNLCIER…NELATEIISL (204 aa). 46 to 53 serves as a coordination point for ATP; the sequence is GEIGSGKT.

This sequence belongs to the ABC transporter superfamily.

This is an uncharacterized protein from Haemophilus influenzae (strain ATCC 51907 / DSM 11121 / KW20 / Rd).